Here is a 226-residue protein sequence, read N- to C-terminus: uncharacterized protein (226 aa).

In terms of domain architecture, HTH cro/C1-type spans 168–226 (ISALRNKLGLTQTDLGKRINVDANVIRNIETGDLVAFNVQDPMVRSLAYALGIRTIKYQ). Residues 179–198 (QTDLGKRINVDANVIRNIET) constitute a DNA-binding region (H-T-H motif).

This is an uncharacterized protein from Acanthamoeba polyphaga mimivirus (APMV).